A 102-amino-acid polypeptide reads, in one-letter code: NADH-quinone oxidoreductase subunit K (102 aa).

Helical transmembrane passes span 6–26, 30–50, and 62–82; these read LEHGLAVAGVLFCLGLVGLMV, ILFVLMSLEIMMNAAALAFVV, and VMFILVISLAAAEASIGLAIL.

The protein belongs to the complex I subunit 4L family. NDH-1 is composed of 13 different subunits. Subunits NuoA, H, J, K, L, M, N constitute the membrane sector of the complex.

The protein localises to the cell inner membrane. The catalysed reaction is a quinone + NADH + 5 H(+)(in) = a quinol + NAD(+) + 4 H(+)(out). In terms of biological role, NDH-1 shuttles electrons from NADH, via FMN and iron-sulfur (Fe-S) centers, to quinones in the respiratory chain. The immediate electron acceptor for the enzyme in this species is believed to be ubiquinone. Couples the redox reaction to proton translocation (for every two electrons transferred, four hydrogen ions are translocated across the cytoplasmic membrane), and thus conserves the redox energy in a proton gradient. This chain is NADH-quinone oxidoreductase subunit K, found in Pseudomonas syringae pv. syringae (strain B728a).